The primary structure comprises 169 residues: Sulfopyruvate decarboxylase subunit alpha (169 aa).

It belongs to the ComD family. As to quaternary structure, heterododecamer composed of 6 subunits alpha and 6 subunits beta.

It catalyses the reaction 3-sulfopyruvate + H(+) = sulfoacetaldehyde + CO2. It participates in cofactor biosynthesis; coenzyme M biosynthesis; sulfoacetaldehyde from phosphoenolpyruvate and sulfite: step 4/4. With respect to regulation, inhibited by oxygen when heated in air at 80 degrees Celsius. The enzyme is reactivated by addition of dithionite. Functionally, involved in the biosynthesis of the coenzyme M (2-mercaptoethanesulfonic acid). Catalyzes the decarboxylation of sulfopyruvate to sulfoacetaldehyde. This is Sulfopyruvate decarboxylase subunit alpha from Methanocaldococcus jannaschii (strain ATCC 43067 / DSM 2661 / JAL-1 / JCM 10045 / NBRC 100440) (Methanococcus jannaschii).